A 416-amino-acid polypeptide reads, in one-letter code: Putative competence-damage inducible protein (416 aa).

The protein belongs to the CinA family.

This is Putative competence-damage inducible protein from Levilactobacillus brevis (strain ATCC 367 / BCRC 12310 / CIP 105137 / JCM 1170 / LMG 11437 / NCIMB 947 / NCTC 947) (Lactobacillus brevis).